Reading from the N-terminus, the 477-residue chain is MDLRLYDTLTRRKRAFTPIDPSNVRMYVCGPTVYDFAHIGNARPVIVFDVLFRLLRHLYGDDHVTYARNITDVDDKINDRAARDFPDLPLNEAIRKVTEKTAAQFQADVAALGCLPPTHQPRATEFVLPRTDGKTDMVTFIKQLIARGHAYEAGGEVLFDVRSMPDYGALSGRRLDEQKAGARVAVDAHKRNPADFVLWKLSSENEPGWDSPWGRGRPGWHIECSAMSTAYLGDVFDIHGGGLDLIFPHHENEIAQSRCAHGTHAMANYWMHNGFLQVEGEKMSKSLGNFVTINELLTTEKFGGRKWPGEVLRLNMLRTHYRQPIDWTIKALEESETILRRVCGRIKQFEYARRGMPTKERSVQLNLPPEILEALVDDLNTPLMLSRIGELSYDDAFDHALLSIGIDVLSYARWLRSQEQYASSNVDELVVARLEARMRKDFKESDRIRDELAAMGVVLKDGKDADGKPVTTWEIAR.

Cys-29 serves as a coordination point for Zn(2+). Residues 31–41 (PTVYDFAHIGN) carry the 'HIGH' region motif. Zn(2+) contacts are provided by Cys-224, His-249, and Glu-253. A 'KMSKS' region motif is present at residues 282 to 286 (KMSKS). Residue Lys-285 participates in ATP binding.

The protein belongs to the class-I aminoacyl-tRNA synthetase family. As to quaternary structure, monomer. Requires Zn(2+) as cofactor.

The protein localises to the cytoplasm. The enzyme catalyses tRNA(Cys) + L-cysteine + ATP = L-cysteinyl-tRNA(Cys) + AMP + diphosphate. The chain is Cysteine--tRNA ligase from Nitrobacter winogradskyi (strain ATCC 25391 / DSM 10237 / CIP 104748 / NCIMB 11846 / Nb-255).